Reading from the N-terminus, the 500-residue chain is Toluene-4-monooxygenase system, hydroxylase component subunit alpha (500 aa).

Fe cation contacts are provided by E104, E134, H137, E197, E231, and H234.

This sequence belongs to the TmoA/XamoA family. In terms of assembly, the alkene monooxygenase multicomponent enzyme system is composed of an electron transfer component and a monooxygenase component interacting with the effector protein TmoD. The electron transfer component is composed of a ferredoxin reductase (TmoF) and a ferredoxin (TmoC), and the monooxygenase component is formed by a heterohexamer (dimer of heterotrimers) of two alpha subunits (TmoA), two beta subunits (TmoE) and two gamma subunits (TmoB). The cofactor is Fe(2+).

It carries out the reaction toluene + NADH + O2 + H(+) = 4-methylphenol + NAD(+) + H2O. It participates in xenobiotic degradation; toluene degradation. Its activity is regulated as follows. Inhibited by Zn(2+) and Cu(2+). Its function is as follows. Component of the toluene-4-monooxygenase multicomponent enzyme system which catalyzes the O2- and NADH-dependent hydroxylation of toluene to form p-cresol. Also able to convert benzene to phenol, catechol, and 1,2,3-trihydroxybenzene by successive hydroxylations. The protein is Toluene-4-monooxygenase system, hydroxylase component subunit alpha of Ectopseudomonas mendocina (Pseudomonas mendocina).